Here is a 177-residue protein sequence, read N- to C-terminus: ECF RNA polymerase sigma factor SigL (177 aa).

The segment at 18–85 (LYDEHAAVLW…MIIDERRSAR (68 aa)) is sigma-70 factor domain-2. Residues 42–45 (DVVQ) carry the Interaction with polymerase core subunit RpoC motif. Residues 119–167 (ALAQLSAEHRAVIQRSYYRGWSTAQIATDLGIAEGTVKSRLHYAVRALR) are sigma-70 factor domain-4. The segment at residues 141–160 (TAQIATDLGIAEGTVKSRLH) is a DNA-binding region (H-T-H motif).

The protein belongs to the sigma-70 factor family. ECF subfamily. Interacts transiently with the RNA polymerase catalytic core formed by RpoA, RpoB, RpoC and RpoZ (2 alpha, 1 beta, 1 beta' and 1 omega subunit) to form the RNA polymerase holoenzyme that can initiate transcription. Interacts (via sigma-70 factor domain 4) with anti-sigma-L factor RslA.

Sigma factors are initiation factors that promote the attachment of RNA polymerase to specific initiation sites and are then released. Extracytoplasmic function (ECF) sigma factors are held in an inactive form by an anti-sigma factor until released by regulated intramembrane proteolysis. The protein is ECF RNA polymerase sigma factor SigL (sigL) of Mycobacterium tuberculosis (strain ATCC 35801 / TMC 107 / Erdman).